The sequence spans 254 residues: Membrane protein US20 (254 aa).

A run of 7 helical transmembrane segments spans residues 31–51 (AIFI…WLGF), 62–82 (YSFF…YTLG), 89–109 (ATVL…FQMC), 114–134 (VLVG…GLAF), 143–163 (WKCI…LALL), 178–198 (AFSI…VIFF), and 208–228 (AVCL…MLSG).

It localises to the host membrane. This is Membrane protein US20 (US20) from Homo sapiens (Human).